Reading from the N-terminus, the 254-residue chain is 3-deoxy-manno-octulosonate cytidylyltransferase (254 aa).

This sequence belongs to the KdsB family.

The protein resides in the cytoplasm. The catalysed reaction is 3-deoxy-alpha-D-manno-oct-2-ulosonate + CTP = CMP-3-deoxy-beta-D-manno-octulosonate + diphosphate. It participates in nucleotide-sugar biosynthesis; CMP-3-deoxy-D-manno-octulosonate biosynthesis; CMP-3-deoxy-D-manno-octulosonate from 3-deoxy-D-manno-octulosonate and CTP: step 1/1. It functions in the pathway bacterial outer membrane biogenesis; lipopolysaccharide biosynthesis. Activates KDO (a required 8-carbon sugar) for incorporation into bacterial lipopolysaccharide in Gram-negative bacteria. This chain is 3-deoxy-manno-octulosonate cytidylyltransferase, found in Pseudomonas syringae pv. syringae (strain B728a).